A 30-amino-acid chain; its full sequence is Cyclotide cter-O (30 aa).

Positions Gly1–Asn30 form a cross-link, cyclopeptide (Gly-Asn). 3 cysteine pairs are disulfide-bonded: Cys4–Cys20, Cys8–Cys22, and Cys13–Cys27.

Post-translationally, this is a cyclic peptide.

It is found in the secreted. Functionally, probably participates in a plant defense mechanism. In Clitoria ternatea (Butterfly pea), this protein is Cyclotide cter-O.